We begin with the raw amino-acid sequence, 739 residues long: Adenosylcobalamin-dependent ribonucleoside-triphosphate reductase (739 aa).

The cysteines at positions 119 and 419 are disulfide-linked. The interval 147 to 158 is effector region-1; that stretch reads SMPFSFLFDELM. An effector region-2 region spans residues 168–313; the sequence is ARSNISQIPR…ICNLIGKAVV (146 aa). Residues C408 and E410 contribute to the active site. The tract at residues 565 to 626 is adenosylcobalamin-binding-1; the sequence is FHYGAYLIQR…NPNFASAGTV (62 aa). The tract at residues 685–724 is adenosylcobalamin-binding-2; that stretch reads LQQAPKEPIDKETYEKRSQEITGNVEEVFSQLNSDVKDLE.

This sequence belongs to the class II ribonucleoside-triphosphate reductase family. Monomer. Adenosylcob(III)alamin is required as a cofactor.

It catalyses the reaction a 2'-deoxyribonucleoside 5'-triphosphate + [thioredoxin]-disulfide + H2O = a ribonucleoside 5'-triphosphate + [thioredoxin]-dithiol. Allosterically regulated by ATP and dNTP. The polypeptide is Adenosylcobalamin-dependent ribonucleoside-triphosphate reductase (rtpR) (Lactobacillus delbrueckii subsp. bulgaricus (strain ATCC 11842 / DSM 20081 / BCRC 10696 / JCM 1002 / NBRC 13953 / NCIMB 11778 / NCTC 12712 / WDCM 00102 / Lb 14)).